A 367-amino-acid chain; its full sequence is Holliday junction branch migration complex subunit RuvB (367 aa).

Residues 2–196 (TDEPLTDRPP…FGFTARLDFY (195 aa)) are large ATPase domain (RuvB-L). ATP is bound by residues leucine 35, arginine 36, glycine 77, lysine 80, threonine 81, threonine 82, 143–145 (EDF), arginine 186, tyrosine 196, and arginine 233. Position 81 (threonine 81) interacts with Mg(2+). Residues 197–267 (EPADLERIVH…VAQAALAVYE (71 aa)) are small ATPAse domain (RuvB-S). The interval 270-367 (EHGLDRLDRA…IDRDAGEPTA (98 aa)) is head domain (RuvB-H). The DNA site is built by arginine 325 and arginine 330.

Belongs to the RuvB family. In terms of assembly, homohexamer. Forms an RuvA(8)-RuvB(12)-Holliday junction (HJ) complex. HJ DNA is sandwiched between 2 RuvA tetramers; dsDNA enters through RuvA and exits via RuvB. An RuvB hexamer assembles on each DNA strand where it exits the tetramer. Each RuvB hexamer is contacted by two RuvA subunits (via domain III) on 2 adjacent RuvB subunits; this complex drives branch migration. In the full resolvosome a probable DNA-RuvA(4)-RuvB(12)-RuvC(2) complex forms which resolves the HJ.

It localises to the cytoplasm. It carries out the reaction ATP + H2O = ADP + phosphate + H(+). In terms of biological role, the RuvA-RuvB-RuvC complex processes Holliday junction (HJ) DNA during genetic recombination and DNA repair, while the RuvA-RuvB complex plays an important role in the rescue of blocked DNA replication forks via replication fork reversal (RFR). RuvA specifically binds to HJ cruciform DNA, conferring on it an open structure. The RuvB hexamer acts as an ATP-dependent pump, pulling dsDNA into and through the RuvAB complex. RuvB forms 2 homohexamers on either side of HJ DNA bound by 1 or 2 RuvA tetramers; 4 subunits per hexamer contact DNA at a time. Coordinated motions by a converter formed by DNA-disengaged RuvB subunits stimulates ATP hydrolysis and nucleotide exchange. Immobilization of the converter enables RuvB to convert the ATP-contained energy into a lever motion, pulling 2 nucleotides of DNA out of the RuvA tetramer per ATP hydrolyzed, thus driving DNA branch migration. The RuvB motors rotate together with the DNA substrate, which together with the progressing nucleotide cycle form the mechanistic basis for DNA recombination by continuous HJ branch migration. Branch migration allows RuvC to scan DNA until it finds its consensus sequence, where it cleaves and resolves cruciform DNA. The chain is Holliday junction branch migration complex subunit RuvB from Acidothermus cellulolyticus (strain ATCC 43068 / DSM 8971 / 11B).